The following is a 214-amino-acid chain: Probable transaldolase (214 aa).

The Schiff-base intermediate with substrate role is filled by lysine 83.

The protein belongs to the transaldolase family. Type 3B subfamily.

Its subcellular location is the cytoplasm. The catalysed reaction is D-sedoheptulose 7-phosphate + D-glyceraldehyde 3-phosphate = D-erythrose 4-phosphate + beta-D-fructose 6-phosphate. The protein operates within carbohydrate degradation; pentose phosphate pathway; D-glyceraldehyde 3-phosphate and beta-D-fructose 6-phosphate from D-ribose 5-phosphate and D-xylulose 5-phosphate (non-oxidative stage): step 2/3. Its function is as follows. Transaldolase is important for the balance of metabolites in the pentose-phosphate pathway. The polypeptide is Probable transaldolase (Leptospira interrogans serogroup Icterohaemorrhagiae serovar copenhageni (strain Fiocruz L1-130)).